The primary structure comprises 414 residues: Lysosome-associated membrane glycoprotein 1 (414 aa).

A signal peptide spans 1 to 18; sequence MGGAARAVLLGFLQASSS. The segment at 19–181 is first lumenal domain; it reads FDVRDSTGKV…SANKTECRED (163 aa). Residues 19–379 are Lumenal-facing; that stretch reads FDVRDSTGKV…EECQLDENNM (361 aa). An intrachain disulfide couples C29 to C67. 10 N-linked (GlcNAc...) asparagine glycosylation sites follow: N33, N58, N71, N90, N108, N117, N154, N159, N168, and N174. The cysteines at positions 142 and 178 are disulfide-linked. A hinge region spans residues 182-224; the sequence is MVSTTTVAPTTPKHATSQVPTTSPAPTAAPSSPAVGKYNVTGA. Residues 186–213 form a disordered region; the sequence is TTVAPTTPKHATSQVPTTSPAPTAAPSS. The span at 196 to 213 shows a compositional bias: low complexity; it reads ATSQVPTTSPAPTAAPSS. Residues N220, N225, N238, N259, N289, N301, and N319 are each glycosylated (N-linked (GlcNAc...) asparagine). A second lumenal domain region spans residues 225 to 379; it reads NGTCVLASMG…EECQLDENNM (155 aa). Cysteines 228 and 266 form a disulfide. C335 and C372 form a disulfide bridge. The helical transmembrane segment at 380–403 threads the bilayer; sequence LIPIIVGAALAGLVLIVLIAYLIG. The Cytoplasmic portion of the chain corresponds to 404–414; the sequence is RKRSHAGYQTI.

Belongs to the LAMP family.

Its subcellular location is the lysosome membrane. It is found in the endosome membrane. It localises to the late endosome membrane. The protein localises to the cell membrane. The protein resides in the cytolytic granule membrane. Lysosomal membrane glycoprotein which plays an important role in lysosome biogenesis, lysosomal pH regulation, autophagy and cholesterol homeostasis. Its function is as follows. (Microbial infection) Plays an essential role in efficient replication and spread of Marek's disease virus, by facilitating viral cell-to-cell spread. The sequence is that of Lysosome-associated membrane glycoprotein 1 (LAMP1) from Gallus gallus (Chicken).